A 250-amino-acid chain; its full sequence is MLLILSSAKTLVFDDAFTVPKITEPIFKKEGEFLVDLLQKFSEKDLEKLLKVSESLANLNYQRFQSFNTSEKQASILAYRGDVFKQLQLNKFNKNDYLFAQNHVRIISGLYGILRPLDQISPYRLEMNTCLKTENNDNLYQFWEEKVTEKLNNELEQHNNQVLLNLASDEYSRMIKNEKFNYPIFKVSFKEMRNGKLKTIGIIAKKSRGLMTNWIIENKIDDSSKLKDYNGLGYHYDDSLSNEKEMVFIK.

This sequence belongs to the UPF0246 family.

This Crocosphaera subtropica (strain ATCC 51142 / BH68) (Cyanothece sp. (strain ATCC 51142)) protein is UPF0246 protein cce_3295.